A 538-amino-acid chain; its full sequence is Phosphoenolpyruvate carboxykinase (ATP) (538 aa).

Arg-64 serves as a coordination point for substrate. An ATP-binding site is contributed by Arg-152. Residues Tyr-205 and Lys-211 each contribute to the substrate site. ATP is bound by residues Lys-211, His-230, and 246 to 254 (GLSGTGKTT). The Mn(2+) site is built by Lys-211 and His-230. Asp-267 is a Mn(2+) binding site. Residues Glu-295, Arg-331, Arg-344, 447-448 (RI), and Thr-453 contribute to the ATP site. Arg-331 contacts substrate.

This sequence belongs to the phosphoenolpyruvate carboxykinase (ATP) family. In terms of assembly, monomer. Requires Mn(2+) as cofactor.

Its subcellular location is the cytoplasm. The catalysed reaction is oxaloacetate + ATP = phosphoenolpyruvate + ADP + CO2. Its pathway is carbohydrate biosynthesis; gluconeogenesis. Functionally, involved in gluconeogenesis. Catalyzes the conversion of oxaloacetate (OAA) to phosphoenolpyruvate (PEP) through direct phosphoryl transfer between the nucleoside triphosphate and OAA. The protein is Phosphoenolpyruvate carboxykinase (ATP) of Actinobacillus succinogenes (strain ATCC 55618 / DSM 22257 / CCUG 43843 / 130Z).